Reading from the N-terminus, the 217-residue chain is Glycosylphosphatidylinositol anchor biosynthesis protein 11 (217 aa).

The next 6 helical transmembrane spans lie at 45–61 (TWQT…YWFI), 74–94 (WLLV…ATVY), 111–131 (VTCI…GAPF), 138–158 (TWLL…SVLN), 169–189 (YFIS…LDWD), and 195–215 (WPIP…TFCS).

This sequence belongs to the PIGF family.

It localises to the endoplasmic reticulum membrane. It functions in the pathway glycolipid biosynthesis; glycosylphosphatidylinositol-anchor biosynthesis. Its function is as follows. Acts in the GPI biosynthetic pathway between GlcNAc-PI synthesis and GPI transfer to protein. The chain is Glycosylphosphatidylinositol anchor biosynthesis protein 11 (GPI11) from Eremothecium gossypii (strain ATCC 10895 / CBS 109.51 / FGSC 9923 / NRRL Y-1056) (Yeast).